Here is a 229-residue protein sequence, read N- to C-terminus: Ras-related protein RabZ (229 aa).

The segment at 1–39 is disordered; the sequence is MGCFHSREPTATGKTKKEEPTSAVKTNKEEKSSNYVSEP. G2 carries the N-myristoyl glycine lipid modification. C3 carries the S-palmitoyl cysteine lipid modification. Over residues 15–32 the composition is skewed to basic and acidic residues; sequence TKKEEPTSAVKTNKEEKS. 57–64 is a GTP binding site; the sequence is GDQATGKS. Positions 79-88 match the Effector region motif; that stretch reads HKPSPIIIDC. GTP is bound by residues 106-110 and 164-167; these read DTAGQ and NKCD.

This sequence belongs to the small GTPase superfamily. Rab family. Post-translationally, although this sequence lacks the C-terminal cysteine motifs subject to isoprenylation in other Rab proteins, it does have N-terminal myristoylation and S-palmitoylation sequence motifs.

This Dictyostelium discoideum (Social amoeba) protein is Ras-related protein RabZ (rabZ).